We begin with the raw amino-acid sequence, 523 residues long: GMP synthase [glutamine-hydrolyzing] (523 aa).

A Glutamine amidotransferase type-1 domain is found at 8–205 (KILILDFGSQ…VVNICGCETK (198 aa)). Catalysis depends on cysteine 85, which acts as the Nucleophile. Residues histidine 179 and glutamate 181 contribute to the active site. One can recognise a GMPS ATP-PPase domain in the interval 206–398 (WTAENIIEDA…LGLPAEMINR (193 aa)). An ATP-binding site is contributed by 233–239 (SGGVDSS).

Homodimer.

The enzyme catalyses XMP + L-glutamine + ATP + H2O = GMP + L-glutamate + AMP + diphosphate + 2 H(+). The protein operates within purine metabolism; GMP biosynthesis; GMP from XMP (L-Gln route): step 1/1. In terms of biological role, catalyzes the synthesis of GMP from XMP. The chain is GMP synthase [glutamine-hydrolyzing] from Haemophilus influenzae (strain 86-028NP).